The primary structure comprises 310 residues: Vomeronasal type-1 receptor 90 (310 aa).

Residues 1-20 (MRRISTLYGVVDKQAIFFSE) lie on the Extracellular side of the membrane. The chain crosses the membrane as a helical span at residues 21–41 (VVIGISFNSILFLFHIFQFLL). The Cytoplasmic portion of the chain corresponds to 42–46 (ERRLR). A helical membrane pass occupies residues 47-67 (ITDLIISLLALIHLGMLTVMG). The Extracellular portion of the chain corresponds to 68 to 93 (FRAVDIFASQNVWNDIKCKSLAHLHR). Cys-85 and Cys-172 are disulfide-bonded. The helical transmembrane segment at 94 to 114 (LLRGLSLCATCLLSIFQAITL) threads the bilayer. At 115–135 (SPRSSCLAKFKYKSTQHSLCS) the chain is on the cytoplasmic side. A helical membrane pass occupies residues 136-156 (LLVLWAFYMSCGTHYSFTIVA). Topologically, residues 157-183 (DYNFSSRSLIFVTESCIILPMDYITRH) are extracellular. Asn-159 is a glycosylation site (N-linked (GlcNAc...) asparagine). The helical transmembrane segment at 184–204 (LFFILGIFRDVSFIGLMALSS) threads the bilayer. Over 205–238 (GYMVALLCRHRKQAQHLHRTSLSPKASPEQRATR) the chain is Cytoplasmic. The helical transmembrane segment at 239 to 259 (TILLLMSFFVLMYCLDCTISA) threads the bilayer. The Extracellular portion of the chain corresponds to 260 to 271 (SRLMHNGEPIHH). Residues 272–292 (SIQMMVSNSYATLSPLLLIVT) form a helical membrane-spanning segment. The Cytoplasmic segment spans residues 293-310 (ENRISRFLKSLLGRTVDA).

Belongs to the G-protein coupled receptor 1 family. As to expression, expressed in 1-4% of neurons of the vomeronasal organ. Only one pheromone receptor gene may be expressed in a particular neuron. Not expressed in the main olfactory epithelium.

The protein resides in the cell membrane. Putative pheromone receptor implicated in the regulation of social as well as reproductive behavior. The chain is Vomeronasal type-1 receptor 90 (Vom1r90) from Rattus norvegicus (Rat).